We begin with the raw amino-acid sequence, 48 residues long: Photosystem II reaction center protein K (48 aa).

Residues 1 to 11 (MFLFNLEQSIG) constitute a propeptide that is removed on maturation. Residues 23–43 (LVDVLPIIPLLFLLLAFVWQA) traverse the membrane as a helical segment.

It belongs to the PsbK family. As to quaternary structure, PSII is composed of 1 copy each of membrane proteins PsbA, PsbB, PsbC, PsbD, PsbE, PsbF, PsbH, PsbI, PsbJ, PsbK, PsbL, PsbM, PsbT, PsbX, PsbY, PsbZ, Psb30/Ycf12, at least 3 peripheral proteins of the oxygen-evolving complex and a large number of cofactors. It forms dimeric complexes.

Its subcellular location is the plastid. It localises to the chloroplast thylakoid membrane. In terms of biological role, one of the components of the core complex of photosystem II (PSII). PSII is a light-driven water:plastoquinone oxidoreductase that uses light energy to abstract electrons from H(2)O, generating O(2) and a proton gradient subsequently used for ATP formation. It consists of a core antenna complex that captures photons, and an electron transfer chain that converts photonic excitation into a charge separation. This chain is Photosystem II reaction center protein K, found in Lepocinclis buetschlii.